We begin with the raw amino-acid sequence, 266 residues long: N-formylglutamate deformylase (266 aa).

The protein belongs to the N-formylglutamate deformylase family. As to quaternary structure, monomer.

The enzyme catalyses N-formyl-L-glutamate + H2O = formate + L-glutamate. Its pathway is amino-acid degradation; L-histidine degradation into L-glutamate; L-glutamate from N-formimidoyl-L-glutamate (deiminase route): step 2/2. Catalyzes the hydrolysis of N-formyl-L-glutamate to formate and L-glutamate. Shows weak activity with N-formyl-L-glutamine. The sequence is that of N-formylglutamate deformylase from Pseudomonas aeruginosa (strain ATCC 15692 / DSM 22644 / CIP 104116 / JCM 14847 / LMG 12228 / 1C / PRS 101 / PAO1).